The chain runs to 216 residues: Protein-L-isoaspartate O-methyltransferase (216 aa).

Ser63 is a catalytic residue.

Belongs to the methyltransferase superfamily. L-isoaspartyl/D-aspartyl protein methyltransferase family.

Its subcellular location is the cytoplasm. The enzyme catalyses [protein]-L-isoaspartate + S-adenosyl-L-methionine = [protein]-L-isoaspartate alpha-methyl ester + S-adenosyl-L-homocysteine. Catalyzes the methyl esterification of L-isoaspartyl residues in peptides and proteins that result from spontaneous decomposition of normal L-aspartyl and L-asparaginyl residues. It plays a role in the repair and/or degradation of damaged proteins. The chain is Protein-L-isoaspartate O-methyltransferase from Rhodopseudomonas palustris (strain BisB18).